Here is a 182-residue protein sequence, read N- to C-terminus: Glycoprotein Q2 (182 aa).

A signal peptide spans 1-20 (MHFVAVYILTHFHAYPGVAA). Residues asparagine 74 and asparagine 110 are each glycosylated (N-linked (GlcNAc...) asparagine; by host).

As to quaternary structure, interacts with isoform gQ2. The heterodimer gQ1-gQ2 associates with the glycoprotein complex gH-gL to form a tetrameric complex. The gH/gL/gQ1/gQ2 complex binds to host TNFRSF4. Glycosylated by host.

The protein resides in the virion membrane. It localises to the host endoplasmic reticulum-Golgi intermediate compartment. Its function is as follows. Plays a role in virus entry by participating in host receptor binding at the cell surface. This Human herpesvirus 6B (strain Z29) (HHV-6 variant B) protein is Glycoprotein Q2.